The chain runs to 166 residues: UPF0254 protein Mevan_0254 (166 aa).

Belongs to the UPF0254 family.

The polypeptide is UPF0254 protein Mevan_0254 (Methanococcus vannielii (strain ATCC 35089 / DSM 1224 / JCM 13029 / OCM 148 / SB)).